Here is a 36-residue protein sequence, read N- to C-terminus: Endoglucanase Cel12A (36 aa).

It belongs to the glycosyl hydrolase 12 (cellulase H) family.

The protein resides in the secreted. It is found in the extracellular space. The catalysed reaction is Endohydrolysis of (1-&gt;4)-beta-D-glucosidic linkages in cellulose, lichenin and cereal beta-D-glucans.. Has carboxymethylcellulase activity. The sequence is that of Endoglucanase Cel12A from Gloeophyllum trabeum (Brown rot fungus).